Consider the following 285-residue polypeptide: tRNA-cytidine(32) 2-sulfurtransferase (285 aa).

Residues 49–54 (SGGKDS) carry the PP-loop motif motif. Cysteine 124, cysteine 127, and cysteine 215 together coordinate [4Fe-4S] cluster.

The protein belongs to the TtcA family. As to quaternary structure, homodimer. Mg(2+) is required as a cofactor. It depends on [4Fe-4S] cluster as a cofactor.

The protein resides in the cytoplasm. It carries out the reaction cytidine(32) in tRNA + S-sulfanyl-L-cysteinyl-[cysteine desulfurase] + AH2 + ATP = 2-thiocytidine(32) in tRNA + L-cysteinyl-[cysteine desulfurase] + A + AMP + diphosphate + H(+). The protein operates within tRNA modification. Its function is as follows. Catalyzes the ATP-dependent 2-thiolation of cytidine in position 32 of tRNA, to form 2-thiocytidine (s(2)C32). The sulfur atoms are provided by the cysteine/cysteine desulfurase (IscS) system. This chain is tRNA-cytidine(32) 2-sulfurtransferase, found in Hahella chejuensis (strain KCTC 2396).